Here is a 452-residue protein sequence, read N- to C-terminus: tRNA modification GTPase MnmE (452 aa).

Positions 22, 79, and 119 each coordinate (6S)-5-formyl-5,6,7,8-tetrahydrofolate. Residues 215 to 375 enclose the TrmE-type G domain; sequence GMKVVIAGRP…LRQHLKQSMG (161 aa). Asn225 lines the K(+) pocket. GTP-binding positions include 225 to 230, 244 to 250, 269 to 272, and 333 to 336; these read NAGKSS, TDIAGTT, DTAG, and NKAD. Ser229 lines the Mg(2+) pocket. Residues Thr244, Ile246, and Thr249 each coordinate K(+). Thr250 contributes to the Mg(2+) binding site. Position 452 (Lys452) interacts with (6S)-5-formyl-5,6,7,8-tetrahydrofolate.

Belongs to the TRAFAC class TrmE-Era-EngA-EngB-Septin-like GTPase superfamily. TrmE GTPase family. In terms of assembly, homodimer. Heterotetramer of two MnmE and two MnmG subunits. K(+) serves as cofactor.

The protein resides in the cytoplasm. Functionally, exhibits a very high intrinsic GTPase hydrolysis rate. Involved in the addition of a carboxymethylaminomethyl (cmnm) group at the wobble position (U34) of certain tRNAs, forming tRNA-cmnm(5)s(2)U34. The protein is tRNA modification GTPase MnmE of Histophilus somni (strain 129Pt) (Haemophilus somnus).